The following is a 119-amino-acid chain: V-type proton ATPase subunit F (119 aa).

This sequence belongs to the V-ATPase F subunit family. V-ATPase is a heteromultimeric enzyme made up of two complexes: the ATP-hydrolytic V1 complex and the proton translocation V0 complex. The V1 complex consists of three catalytic AB heterodimers that form a heterohexamer, three peripheral stalks each consisting of EG heterodimers, one central rotor including subunits D and F, and the regulatory subunits C and H. The proton translocation complex V0 consists of the proton transport subunit a, a ring of proteolipid subunits c9c'', rotary subunit d, subunits e and f, and the accessory subunits ATP6AP1/Ac45 and ATP6AP2/PRR. In terms of tissue distribution, expressed in brain (at protein level).

It localises to the cytoplasmic vesicle. Its subcellular location is the secretory vesicle. The protein resides in the synaptic vesicle membrane. The protein localises to the clathrin-coated vesicle membrane. Its function is as follows. Subunit of the V1 complex of vacuolar(H+)-ATPase (V-ATPase), a multisubunit enzyme composed of a peripheral complex (V1) that hydrolyzes ATP and a membrane integral complex (V0) that translocates protons. V-ATPase is responsible for acidifying and maintaining the pH of intracellular compartments and in some cell types, is targeted to the plasma membrane, where it is responsible for acidifying the extracellular environment. The chain is V-type proton ATPase subunit F (ATP6V1F) from Bos taurus (Bovine).